The primary structure comprises 137 residues: Small ribosomal subunit protein uS12 (137 aa).

The disordered stretch occupies residues 1–57 (MPTINQLVRKPRKSKVEKSKSPALNVGYNSHKKVQTNVSSPQKRGVATRVGTMTPKK). Asp-102 bears the 3-methylthioaspartic acid mark.

This sequence belongs to the universal ribosomal protein uS12 family. Part of the 30S ribosomal subunit. Contacts proteins S8 and S17. May interact with IF1 in the 30S initiation complex.

Its function is as follows. With S4 and S5 plays an important role in translational accuracy. Functionally, interacts with and stabilizes bases of the 16S rRNA that are involved in tRNA selection in the A site and with the mRNA backbone. Located at the interface of the 30S and 50S subunits, it traverses the body of the 30S subunit contacting proteins on the other side and probably holding the rRNA structure together. The combined cluster of proteins S8, S12 and S17 appears to hold together the shoulder and platform of the 30S subunit. The polypeptide is Small ribosomal subunit protein uS12 (Streptococcus sanguinis (strain SK36)).